Here is a 799-residue protein sequence, read N- to C-terminus: Leucine--tRNA ligase (799 aa).

The short motif at 39–50 (PYPSGAGLHMGH) is the 'HIGH' region element. Positions 575–579 (KMSKS) match the 'KMSKS' region motif. Lys-578 serves as a coordination point for ATP.

Belongs to the class-I aminoacyl-tRNA synthetase family.

Its subcellular location is the cytoplasm. The enzyme catalyses tRNA(Leu) + L-leucine + ATP = L-leucyl-tRNA(Leu) + AMP + diphosphate. The polypeptide is Leucine--tRNA ligase (Malacoplasma penetrans (strain HF-2) (Mycoplasma penetrans)).